The following is a 259-amino-acid chain: MQSRFLISPTLIRTFAHHANLTPRKILHDLPEAAHARKQIPLRPGVILVKKGMTNAWDEKTGMQVPLTILQFDRVQAIDVRTKEKHGYYAVQVGSGIRKPKSITKAEQGNFFSHNIYPKMHVREFRVRDASGLVSPGTIFTTDYFKPKQYVDVKGITKGKGFAGVMKRWGFSGGNASHGASLSHRTPGSTGQNTTPSRVLPGRKMAGHMGHRSRTVKNLLVWAVDADLECILVKGSIPGPNKSAVYVTDTINRSTSATN.

Residues 1 to 15 (MQSRFLISPTLIRTF) constitute a mitochondrion transit peptide. The segment covering 176-197 (ASHGASLSHRTPGSTGQNTTPS) has biased composition (polar residues). The interval 176–208 (ASHGASLSHRTPGSTGQNTTPSRVLPGRKMAGH) is disordered.

It belongs to the universal ribosomal protein uL3 family. As to quaternary structure, component of the mitochondrial large ribosomal subunit (mt-LSU). Mature yeast 74S mitochondrial ribosomes consist of a small (37S) and a large (54S) subunit. The 37S small subunit contains a 15S ribosomal RNA (15S mt-rRNA) and at least 32 different proteins. The 54S large subunit contains a 21S rRNA (21S mt-rRNA) and at least 45 different proteins.

It is found in the cytoplasm. The protein resides in the mitochondrion. Functionally, component of the mitochondrial ribosome (mitoribosome), a dedicated translation machinery responsible for the synthesis of mitochondrial genome-encoded proteins, including at least some of the essential transmembrane subunits of the mitochondrial respiratory chain. The mitoribosomes are attached to the mitochondrial inner membrane and translation products are cotranslationally integrated into the membrane. The chain is Large ribosomal subunit protein uL3m (mrpl9) from Schizosaccharomyces pombe (strain 972 / ATCC 24843) (Fission yeast).